Consider the following 37-residue polypeptide: Bactericidin B-3 (37 aa).

Gly-37 is subject to Glycine amide.

Belongs to the cecropin family.

It is found in the secreted. Functionally, cecropins have lytic and antibacterial activity against several Gram-positive and Gram-negative bacteria. The chain is Bactericidin B-3 from Manduca sexta (Tobacco hawkmoth).